The primary structure comprises 347 residues: Dihydroorotase (347 aa).

2 residues coordinate Zn(2+): histidine 14 and histidine 16. Residues 16 to 18 and asparagine 42 contribute to the substrate site; that span reads HLR. Zn(2+) is bound by residues lysine 100, histidine 137, and histidine 175. Lysine 100 carries the post-translational modification N6-carboxylysine. Histidine 137 is a binding site for substrate. A substrate-binding site is contributed by leucine 220. Aspartate 248 contacts Zn(2+). Aspartate 248 is a catalytic residue. Residues histidine 252 and alanine 264 each contribute to the substrate site.

This sequence belongs to the metallo-dependent hydrolases superfamily. DHOase family. Class II DHOase subfamily. Homodimer. Zn(2+) serves as cofactor.

The enzyme catalyses (S)-dihydroorotate + H2O = N-carbamoyl-L-aspartate + H(+). The protein operates within pyrimidine metabolism; UMP biosynthesis via de novo pathway; (S)-dihydroorotate from bicarbonate: step 3/3. Functionally, catalyzes the reversible cyclization of carbamoyl aspartate to dihydroorotate. In Pseudomonas savastanoi pv. phaseolicola (strain 1448A / Race 6) (Pseudomonas syringae pv. phaseolicola (strain 1448A / Race 6)), this protein is Dihydroorotase.